Consider the following 122-residue polypeptide: Large ribosomal subunit protein bL12 (122 aa).

Belongs to the bacterial ribosomal protein bL12 family. Homodimer. Part of the ribosomal stalk of the 50S ribosomal subunit. Forms a multimeric L10(L12)X complex, where L10 forms an elongated spine to which 2 to 4 L12 dimers bind in a sequential fashion. Binds GTP-bound translation factors.

Functionally, forms part of the ribosomal stalk which helps the ribosome interact with GTP-bound translation factors. Is thus essential for accurate translation. The polypeptide is Large ribosomal subunit protein bL12 (Dichelobacter nodosus (strain VCS1703A)).